The chain runs to 180 residues: Large ribosomal subunit protein uL5 (180 aa).

This sequence belongs to the universal ribosomal protein uL5 family. As to quaternary structure, part of the 50S ribosomal subunit; part of the 5S rRNA/L5/L18/L25 subcomplex. Contacts the 5S rRNA and the P site tRNA. Forms a bridge to the 30S subunit in the 70S ribosome.

Its function is as follows. This is one of the proteins that bind and probably mediate the attachment of the 5S RNA into the large ribosomal subunit, where it forms part of the central protuberance. In the 70S ribosome it contacts protein S13 of the 30S subunit (bridge B1b), connecting the 2 subunits; this bridge is implicated in subunit movement. Contacts the P site tRNA; the 5S rRNA and some of its associated proteins might help stabilize positioning of ribosome-bound tRNAs. This chain is Large ribosomal subunit protein uL5, found in Mycoplasma mycoides subsp. mycoides SC (strain CCUG 32753 / NCTC 10114 / PG1).